The primary structure comprises 367 residues: Alanine racemase (367 aa).

The Proton acceptor; specific for D-alanine role is filled by Lys-34. Lys-34 carries the N6-(pyridoxal phosphate)lysine modification. Arg-131 serves as a coordination point for substrate. Tyr-258 functions as the Proton acceptor; specific for L-alanine in the catalytic mechanism. Met-306 serves as a coordination point for substrate.

This sequence belongs to the alanine racemase family. Pyridoxal 5'-phosphate serves as cofactor.

The catalysed reaction is L-alanine = D-alanine. It functions in the pathway amino-acid biosynthesis; D-alanine biosynthesis; D-alanine from L-alanine: step 1/1. Catalyzes the interconversion of L-alanine and D-alanine. May also act on other amino acids. In Corynebacterium efficiens (strain DSM 44549 / YS-314 / AJ 12310 / JCM 11189 / NBRC 100395), this protein is Alanine racemase (alr).